Here is an 856-residue protein sequence, read N- to C-terminus: Leucine--tRNA ligase (856 aa).

The 'HIGH' region motif lies at 53–63 (PYPSGNLHMGH). A 'KMSKS' region motif is present at residues 622 to 626 (KMSKS). Lys625 serves as a coordination point for ATP.

This sequence belongs to the class-I aminoacyl-tRNA synthetase family.

It localises to the cytoplasm. It carries out the reaction tRNA(Leu) + L-leucine + ATP = L-leucyl-tRNA(Leu) + AMP + diphosphate. This chain is Leucine--tRNA ligase, found in Prochlorococcus marinus (strain MIT 9215).